Reading from the N-terminus, the 265-residue chain is Serine protease 1 (265 aa).

The N-terminal stretch at 1-21 (MKLFVFLALAVAAATAVPAPA) is a signal peptide. Residues 22-35 (QKLTPTPIKDIQGR) constitute a propeptide that is removed on maturation. One can recognise a Peptidase S1 domain in the interval 36-262 (ITNGYPAYEG…YLDWIRDNTG (227 aa)). A disulfide bond links Cys-63 and Cys-79. Active-site charge relay system residues include His-78 and Asp-123. Intrachain disulfides connect Cys-189–Cys-201 and Cys-211–Cys-239. Ser-215 serves as the catalytic Charge relay system.

The protein belongs to the peptidase S1 family. In terms of tissue distribution, abundantly expressed in the larval gut.

Functionally, major function may be to aid in digestion. In Drosophila melanogaster (Fruit fly), this protein is Serine protease 1.